Here is a 326-residue protein sequence, read N- to C-terminus: Glutaminase 2 (326 aa).

7 residues coordinate substrate: Ser-73, Asn-125, Glu-169, Asn-176, Tyr-200, Tyr-252, and Val-270.

Belongs to the glutaminase family. In terms of assembly, homotetramer.

The enzyme catalyses L-glutamine + H2O = L-glutamate + NH4(+). This chain is Glutaminase 2, found in Bacillus cereus (strain ATCC 14579 / DSM 31 / CCUG 7414 / JCM 2152 / NBRC 15305 / NCIMB 9373 / NCTC 2599 / NRRL B-3711).